A 291-amino-acid polypeptide reads, in one-letter code: Protein-export membrane protein SecF (291 aa).

Transmembrane regions (helical) follow at residues 19 to 39, 134 to 154, 156 to 176, 187 to 209, 226 to 246, and 256 to 278; these read LVVI…SWYV, LALG…FLMF, VFVP…ISVA, LGTV…LLNN, MRTG…MAAV, and AAIG…LLNL.

Belongs to the SecD/SecF family. SecF subfamily. In terms of assembly, part of the protein translocation apparatus. Forms a complex with SecD.

The protein localises to the cell membrane. Functionally, involved in protein export. In Haloquadratum walsbyi (strain DSM 16790 / HBSQ001), this protein is Protein-export membrane protein SecF.